A 1035-amino-acid polypeptide reads, in one-letter code: DNA polymerase catalytic subunit (1035 aa).

The protein belongs to the DNA polymerase type-B family.

Its subcellular location is the host nucleus. The catalysed reaction is DNA(n) + a 2'-deoxyribonucleoside 5'-triphosphate = DNA(n+1) + diphosphate. The protein is DNA polymerase catalytic subunit (UL54) of Macaca mulatta (Rhesus macaque).